Reading from the N-terminus, the 911-residue chain is DNA mismatch repair protein MutS (911 aa).

660–667 provides a ligand contact to ATP; sequence GPNMAGKS.

It belongs to the DNA mismatch repair MutS family.

This protein is involved in the repair of mismatches in DNA. It is possible that it carries out the mismatch recognition step. This protein has a weak ATPase activity. This Rhodopseudomonas palustris (strain HaA2) protein is DNA mismatch repair protein MutS.